A 315-amino-acid chain; its full sequence is Olfactory receptor 3A1 (315 aa).

The Extracellular segment spans residues 1–28 (MQPESGANGTVIAEFILLGLLEAPGLQP). The N-linked (GlcNAc...) asparagine glycan is linked to Asn8. Residues 29 to 52 (VVFVLFLFAYLVTVRGNLSILAAV) form a helical membrane-spanning segment. Over 53-60 (LVEPKLHT) the chain is Cytoplasmic. Residues 61 to 82 (PMYFFLGNLSVLDVGCISVTVP) form a helical membrane-spanning segment. Residues 83–103 (SMLSRLLSRKRAVPCGACLTQ) lie on the Extracellular side of the membrane. A disulfide bond links Cys100 and Cys192. A helical transmembrane segment spans residues 104–123 (LFFFHLFVGVDCFLLTAMAY). Topologically, residues 124 to 143 (DRFLAICRPLTYSTRMSQTV) are cytoplasmic. The helical transmembrane segment at 144 to 161 (QRMLVAASWACAFTNALT) threads the bilayer. Residues 162–199 (HTVAMSTLNFCGPNVINHFYCDLPQLFQLSCSSTQLNE) are Extracellular-facing. The chain crosses the membrane as a helical span at residues 200–223 (LLLFAVGFIMAGTPMALIVISYIH). Topologically, residues 224–240 (VAAAVLRIRSVEGRKKA) are cytoplasmic. A helical transmembrane segment spans residues 241-264 (FSTCGSHLTVVAIFYGSGIFNYMR). At 265 to 275 (LGSTKLSDKDK) the chain is on the extracellular side. Residues 276–295 (AVGIFNTVINPMLNPIIYSF) traverse the membrane as a helical segment. The Cytoplasmic portion of the chain corresponds to 296–315 (RNPDVQSAIWRMLTGRRSLA).

It belongs to the G-protein coupled receptor 1 family.

Its subcellular location is the cell membrane. Odorant receptor. The protein is Olfactory receptor 3A1 (OR3A1) of Homo sapiens (Human).